We begin with the raw amino-acid sequence, 356 residues long: Dynein axonemal heavy chain 12 (356 aa).

6 ANK repeats span residues 17-46 (DSSS…DANV), 50-81 (SGHL…AIKR), 82-111 (SGIS…DVNF), 124-153 (HRKS…MPNQ), 154-183 (DPVN…NVNY), and 185-218 (CRVN…DTEL). In terms of domain architecture, SOCS box spans 290–345 (WSEIHFILTNPRSLKHLCRLKIRKCMGRLRLRCPVFMSFLPLPSRLKAYVLYKEYD).

This sequence belongs to the dynein heavy chain family. In terms of assembly, consists of at least two heavy chains and a number of intermediate and light chains.

The protein localises to the cytoplasm. The protein resides in the cytoskeleton. It localises to the cilium axoneme. Its pathway is protein modification; protein ubiquitination. Functionally, force generating protein of respiratory cilia. Produces force towards the minus ends of microtubules. Dynein has ATPase activity; the force-producing power stroke is thought to occur on release of ADP. Involved in sperm motility; implicated in sperm flagellar assembly. In terms of biological role, may be a substrate-recognition component of a SCF-like ECS (Elongin-Cullin-SOCS-box protein) E3 ubiquitin-protein ligase complex which mediates the ubiquitination and subsequent proteasomal degradation of target proteins. The sequence is that of Dynein axonemal heavy chain 12 (DNAH12) from Bos taurus (Bovine).